The chain runs to 94 residues: Co-chaperonin GroES (94 aa).

The protein belongs to the GroES chaperonin family. In terms of assembly, heptamer of 7 subunits arranged in a ring. Interacts with the chaperonin GroEL.

The protein resides in the cytoplasm. Functionally, together with the chaperonin GroEL, plays an essential role in assisting protein folding. The GroEL-GroES system forms a nano-cage that allows encapsulation of the non-native substrate proteins and provides a physical environment optimized to promote and accelerate protein folding. GroES binds to the apical surface of the GroEL ring, thereby capping the opening of the GroEL channel. In Listeria innocua serovar 6a (strain ATCC BAA-680 / CLIP 11262), this protein is Co-chaperonin GroES.